We begin with the raw amino-acid sequence, 258 residues long: Global transcriptional regulator CodY (258 aa).

A GAF domain region spans residues 1–156; that stretch reads MSSLLSKTRR…SATIVGMEML (156 aa). The H-T-H motif DNA-binding region spans 204–223; the sequence is ASKIADKVGITRSVIVNALR.

Belongs to the CodY family.

The protein resides in the cytoplasm. Its function is as follows. DNA-binding global transcriptional regulator which is involved in the adaptive response to starvation and acts by directly or indirectly controlling the expression of numerous genes in response to nutrient availability. During rapid exponential growth, CodY is highly active and represses genes whose products allow adaptation to nutrient depletion. This chain is Global transcriptional regulator CodY, found in Clostridium botulinum (strain Eklund 17B / Type B).